Consider the following 504-residue polypeptide: Putative BTB/POZ domain-containing protein R842 (504 aa).

One can recognise a BTB domain in the interval 21–91; that stretch reads SDVKLILKDN…FYGFKSPSVT (71 aa).

This sequence belongs to the mimivirus BTB/WD family.

The polypeptide is Putative BTB/POZ domain-containing protein R842 (Acanthamoeba polyphaga (Amoeba)).